A 458-amino-acid chain; its full sequence is MPKLYIKTYGCQMNERDSEQVARMFVQKGYTMTDREDEADVILFNSCSIREQAEQKALGKMGLLAKQQRHRPHVVYGMMGCMAQSKKEELFKELPRLDLVVGTQKYHRVFEHVDGILRARQERRMDELQTAFSGTHVCDVAEEADSQNRIRDHLNPGVRSTAYVSIMQGCEMKCAYCIVPYTRGAERSRPIRDVVDEVKMLADAGVKEVTLLGQIVNRYGRQMETAGGKGGFVQLLEAVHEVEGIRRIRFVSPHPIGFRQDLVQAFTYLPKLCSHIHFPMQSGSDRILKMMRRPYRNETYLDLCSRMKQARPDLSITTDIIVGFPGETEEDYLLTRQAVEQVQFDNAFIFRYSPRRGTPAAVMENQIPEEVKEARNQDLLAVVNEIAIRKNRDLVGTVQEVLLEGPSKTNAARLSGRTSQNKPVMVDAAPDLAGEILPIRIEESTGFTLYGVPCPSRG.

The MTTase N-terminal domain occupies 2 to 118 (PKLYIKTYGC…VFEHVDGILR (117 aa)). [4Fe-4S] cluster is bound by residues C11, C47, C81, C170, C174, and C177. Residues 156 to 389 (PGVRSTAYVS…LAVVNEIAIR (234 aa)) enclose the Radical SAM core domain. The region spanning 392–455 (RDLVGTVQEV…GFTLYGVPCP (64 aa)) is the TRAM domain.

This sequence belongs to the methylthiotransferase family. MiaB subfamily. As to quaternary structure, monomer. [4Fe-4S] cluster serves as cofactor.

Its subcellular location is the cytoplasm. The enzyme catalyses N(6)-dimethylallyladenosine(37) in tRNA + (sulfur carrier)-SH + AH2 + 2 S-adenosyl-L-methionine = 2-methylsulfanyl-N(6)-dimethylallyladenosine(37) in tRNA + (sulfur carrier)-H + 5'-deoxyadenosine + L-methionine + A + S-adenosyl-L-homocysteine + 2 H(+). In terms of biological role, catalyzes the methylthiolation of N6-(dimethylallyl)adenosine (i(6)A), leading to the formation of 2-methylthio-N6-(dimethylallyl)adenosine (ms(2)i(6)A) at position 37 in tRNAs that read codons beginning with uridine. In Akkermansia muciniphila (strain ATCC BAA-835 / DSM 22959 / JCM 33894 / BCRC 81048 / CCUG 64013 / CIP 107961 / Muc), this protein is tRNA-2-methylthio-N(6)-dimethylallyladenosine synthase.